We begin with the raw amino-acid sequence, 352 residues long: N-acetyl-gamma-glutamyl-phosphate reductase (352 aa).

Residue C156 is part of the active site.

The protein belongs to the NAGSA dehydrogenase family. Type 1 subfamily.

Its subcellular location is the cytoplasm. The enzyme catalyses N-acetyl-L-glutamate 5-semialdehyde + phosphate + NADP(+) = N-acetyl-L-glutamyl 5-phosphate + NADPH + H(+). Its pathway is amino-acid biosynthesis; L-arginine biosynthesis; N(2)-acetyl-L-ornithine from L-glutamate: step 3/4. In terms of biological role, catalyzes the NADPH-dependent reduction of N-acetyl-5-glutamyl phosphate to yield N-acetyl-L-glutamate 5-semialdehyde. The sequence is that of N-acetyl-gamma-glutamyl-phosphate reductase from Rhodospirillum rubrum (strain ATCC 11170 / ATH 1.1.1 / DSM 467 / LMG 4362 / NCIMB 8255 / S1).